The following is a 150-amino-acid chain: Putative biopolymer transport protein ExbB-like 2 (150 aa).

3 helical membrane-spanning segments follow: residues 5 to 25 (VDYGIIGFLIFLSVIVIAIAI), 63 to 83 (APYIGLLGTVMGIMLTFMDLG), and 97 to 117 (LALALKATGMGLLVAIPAIVI).

It belongs to the ExbB/TolQ family.

It localises to the cell inner membrane. The sequence is that of Putative biopolymer transport protein ExbB-like 2 from Helicobacter pylori (strain J99 / ATCC 700824) (Campylobacter pylori J99).